The sequence spans 954 residues: Glycine dehydrogenase (decarboxylating) (954 aa).

N6-(pyridoxal phosphate)lysine is present on Lys704.

The protein belongs to the GcvP family. As to quaternary structure, the glycine cleavage system is composed of four proteins: P, T, L and H. Pyridoxal 5'-phosphate serves as cofactor.

It carries out the reaction N(6)-[(R)-lipoyl]-L-lysyl-[glycine-cleavage complex H protein] + glycine + H(+) = N(6)-[(R)-S(8)-aminomethyldihydrolipoyl]-L-lysyl-[glycine-cleavage complex H protein] + CO2. The glycine cleavage system catalyzes the degradation of glycine. The P protein binds the alpha-amino group of glycine through its pyridoxal phosphate cofactor; CO(2) is released and the remaining methylamine moiety is then transferred to the lipoamide cofactor of the H protein. The chain is Glycine dehydrogenase (decarboxylating) from Allorhizobium ampelinum (strain ATCC BAA-846 / DSM 112012 / S4) (Agrobacterium vitis (strain S4)).